The primary structure comprises 449 residues: Phosphoglucosamine mutase (449 aa).

Serine 100 functions as the Phosphoserine intermediate in the catalytic mechanism. Serine 100, aspartate 241, aspartate 243, and aspartate 245 together coordinate Mg(2+). Position 100 is a phosphoserine (serine 100).

This sequence belongs to the phosphohexose mutase family. Requires Mg(2+) as cofactor. In terms of processing, activated by phosphorylation.

The catalysed reaction is alpha-D-glucosamine 1-phosphate = D-glucosamine 6-phosphate. Catalyzes the conversion of glucosamine-6-phosphate to glucosamine-1-phosphate. The chain is Phosphoglucosamine mutase from Caldicellulosiruptor bescii (strain ATCC BAA-1888 / DSM 6725 / KCTC 15123 / Z-1320) (Anaerocellum thermophilum).